We begin with the raw amino-acid sequence, 280 residues long: Transcription factor ovo-like homolog lin-48 (280 aa).

4 consecutive C2H2-type zinc fingers follow at residues 133 to 155 (LTCH…IKCH), 161 to 183 (YLCT…TRTH), 189 to 212 (YKCE…RKVH), and 228 to 251 (FVCE…KVVH).

The protein resides in the nucleus. Functionally, transcription factor. Involved in development of the hindgut, the male tail, and the excretory duct cell. Involved in modulating function of excretory duct cells. Plays a role in left/right patterning of cell fates in the hindgut. The sequence is that of Transcription factor ovo-like homolog lin-48 from Caenorhabditis elegans.